The sequence spans 288 residues: Carbon monoxide dehydrogenase medium chain (288 aa).

An FAD-binding PCMH-type domain is found at 1 to 177 (MIPGSFDYHR…TAIRIPVPPT (177 aa)). Residues 32-36 (AGGHS) and 111-115 (TIGGN) contribute to the FAD site.

As to quaternary structure, dimer of heterotrimers. Each heterotrimer consists of a large, a medium and a small subunit. FAD is required as a cofactor.

It carries out the reaction CO + a quinone + H2O = a quinol + CO2. Its function is as follows. Catalyzes the oxidation of carbon monoxide to carbon dioxide. The sequence is that of Carbon monoxide dehydrogenase medium chain (coxM) from Afipia carboxidovorans (strain ATCC 49405 / DSM 1227 / KCTC 32145 / OM5) (Oligotropha carboxidovorans).